Consider the following 371-residue polypeptide: DNA repair protein RAD14 (371 aa).

The tract at residues 26–48 (LSSDQLNRIESRNEPLKTRPLAV) is disordered. Positions 32–42 (NRIESRNEPLK) are enriched in basic and acidic residues. Residues C191, C194, C213, and C216 each coordinate Zn(2+). Residues 191-216 (CIECHINIEMDPVLHDVFKLQVCKQC) fold into a zinc finger.

This sequence belongs to the XPA family. As to quaternary structure, two monomers bind to kinked/damaged DNA (construct with only the C-terminal DNA-binding domain). Component of the nucleotide excision repair factor 1 (NEF1) complex consisting of RAD1, RAD10 and RAD14.

The protein resides in the nucleus. Functionally, involved in nucleotide excision repair. Binds specifically to damaged DNA. Required for the incision step. The polypeptide is DNA repair protein RAD14 (RAD14) (Saccharomyces cerevisiae (strain ATCC 204508 / S288c) (Baker's yeast)).